A 281-amino-acid polypeptide reads, in one-letter code: 18S rRNA (guanine-N(7))-methyltransferase (281 aa).

Residues 212–231 (LPKGLTESQDADQASESMFT) are compositionally biased toward polar residues. A disordered region spans residues 212-281 (LPKGLTESQD…YTGRKRKPRF (70 aa)). Residues 242 to 256 (RDLVKKSREWVLEKK) show a composition bias toward basic and acidic residues.

It belongs to the class I-like SAM-binding methyltransferase superfamily. BUD23/WBSCR22 family. As to quaternary structure, heterodimer with TRMT112; this heterodimerization is necessary for the metabolic stability and activity of the catalytic subunit BUD23. Interacts with GRIP1. May be ubiquitinated and targeted to degradation in response to pro-inflammatory cytokine signaling.

It localises to the nucleus. The protein localises to the nucleoplasm. The protein resides in the cytoplasm. It is found in the perinuclear region. It carries out the reaction a guanosine in 18S rRNA + S-adenosyl-L-methionine = an N(7)-methylguanosine in 18S rRNA + S-adenosyl-L-homocysteine. S-adenosyl-L-methionine-dependent methyltransferase that specifically methylates the N(7) position of a guanine in 18S rRNA. Requires the methyltransferase adapter protein TRM112 for full rRNA methyltransferase activity. Involved in the pre-rRNA processing steps leading to small-subunit rRNA production independently of its RNA-modifying catalytic activity. Important for biogenesis end export of the 40S ribosomal subunit independent on its methyltransferase activity. Locus-specific steroid receptor coactivator. Potentiates transactivation by glucocorticoid (NR3C1), mineralocorticoid (NR3C2), androgen (AR) and progesterone (PGR) receptors. Required for the maintenance of open chromatin at the TSC22D3/GILZ locus to facilitate NR3C1 loading on the response elements. Required for maintenance of dimethylation on histone H3 'Lys-79' (H3K79me2), although direct histone methyltransferase activity is not observed in vitro. The protein is 18S rRNA (guanine-N(7))-methyltransferase of Mus musculus (Mouse).